Reading from the N-terminus, the 707-residue chain is Acetyl-coenzyme A synthetase 1 (707 aa).

CoA is bound by residues 242 to 245 (RGGK) and Thr-361. Residues 437–439 (GEP), 461–466 (DTYWQT), Asp-553, and Arg-568 contribute to the ATP site. A CoA-binding site is contributed by Ser-576. Arg-579 contributes to the ATP binding site. Residue Arg-644 participates in CoA binding. Residues 705 to 707 (VKL) carry the Microbody targeting signal motif.

Belongs to the ATP-dependent AMP-binding enzyme family.

Its subcellular location is the microsome. It is found in the endoplasmic reticulum. It carries out the reaction acetate + ATP + CoA = acetyl-CoA + AMP + diphosphate. Its function is as follows. May be required for assimilation of ethanol and acetate. The polypeptide is Acetyl-coenzyme A synthetase 1 (ACS1) (Kluyveromyces lactis (strain ATCC 8585 / CBS 2359 / DSM 70799 / NBRC 1267 / NRRL Y-1140 / WM37) (Yeast)).